The chain runs to 327 residues: Zinc transport protein ZntB (327 aa).

Residues 1–273 lie on the Cytoplasmic side of the membrane; that stretch reads MDAIKGSELQ…ARRTYTMSLM (273 aa). Residues 274–294 form a helical membrane-spanning segment; the sequence is AMVFLPSTFLTGLFGVNLGGI. Over 295–300 the chain is Periplasmic; the sequence is PGNSWH. Residues 301-321 form a helical membrane-spanning segment; it reads LGFSLFCLMLVVVIGGVAWWL. Topologically, residues 322–327 are cytoplasmic; sequence HRSKWL.

It belongs to the CorA metal ion transporter (MIT) (TC 1.A.35) family.

It is found in the cell inner membrane. It carries out the reaction Zn(2+)(out) + H(+)(out) = Zn(2+)(in) + H(+)(in). Zinc transporter. Acts as a Zn(2+):proton symporter, which likely mediates zinc ion uptake. The polypeptide is Zinc transport protein ZntB (Klebsiella pneumoniae subsp. pneumoniae (strain ATCC 700721 / MGH 78578)).